We begin with the raw amino-acid sequence, 94 residues long: Antitoxin HipB (94 aa).

In terms of domain architecture, HTH cro/C1-type spans 23–77 (MKLVRQQNGWTQSELAKKIGIKQATISNFENNPDNTSLTTFFKILQSLELSMTLC). Residues 34–53 (QSELAKKIGIKQATISNFEN) constitute a DNA-binding region (H-T-H motif).

Homodimer. Forms a HipA(2)HipB(2) heterotetramer which can interact with DNA. This complex also blocks the toxic activity of HipA.

Functionally, antitoxin component of a type II type II toxin-antitoxin (TA) system. Neutralizes the toxic effect of cognate toxin HipA. Represses the hipBA operon promoter. This Escherichia coli O6:H1 (strain CFT073 / ATCC 700928 / UPEC) protein is Antitoxin HipB (hipB).